The sequence spans 190 residues: Glutathione peroxidase 2 (190 aa).

The active site involves Sec40. Sec40 is a non-standard amino acid (selenocysteine).

It belongs to the glutathione peroxidase family. In terms of assembly, homotetramer. In terms of tissue distribution, exclusively expressed in the stomach and small intestine.

The protein resides in the cytoplasm. Its subcellular location is the cytosol. The catalysed reaction is 2 glutathione + H2O2 = glutathione disulfide + 2 H2O. The enzyme catalyses a hydroperoxy polyunsaturated fatty acid + 2 glutathione = a hydroxy polyunsaturated fatty acid + glutathione disulfide + H2O. It carries out the reaction tert-butyl hydroperoxide + 2 glutathione = tert-butanol + glutathione disulfide + H2O. It catalyses the reaction cumene hydroperoxide + 2 glutathione = 2-phenylpropan-2-ol + glutathione disulfide + H2O. The catalysed reaction is (13S)-hydroperoxy-(9Z,11E)-octadecadienoate + 2 glutathione = (13S)-hydroxy-(9Z,11E)-octadecadienoate + glutathione disulfide + H2O. The enzyme catalyses (5S)-hydroperoxy-(6E,8Z,11Z,14Z)-eicosatetraenoate + 2 glutathione = (5S)-hydroxy-(6E,8Z,11Z,14Z)-eicosatetraenoate + glutathione disulfide + H2O. It carries out the reaction (12R)-hydroperoxy-(5Z,8Z,10E,14Z)-eicosatetraenoate + 2 glutathione = (12R)-hydroxy-(5Z,8Z,10E,14Z)-eicosatetraenoate + glutathione disulfide + H2O. It catalyses the reaction (15S)-hydroperoxy-(5Z,8Z,11Z,13E)-eicosatetraenoate + 2 glutathione = (15S)-hydroxy-(5Z,8Z,11Z,13E)-eicosatetraenoate + glutathione disulfide + H2O. Catalyzes the reduction of hydroperoxides in a glutathione-dependent manner thus regulating cellular redox homeostasis. Can reduce small soluble hydroperoxides such as H2O2, cumene hydroperoxide and tert-butyl hydroperoxide, as well as several fatty acid-derived hydroperoxides. Cannot reduce phosphatidycholine hydroperoxide. In Macaca fuscata fuscata (Japanese macaque), this protein is Glutathione peroxidase 2 (GPX2).